Consider the following 751-residue polypeptide: MLGDDKDSDDLNLFLNAIGEAGDEEGPTSFNDIDFLTFDDEDLHNPFQDCETSPINEPPKVYVAPRVMISHQDSFSEDSRTDVIEDARILPASPRLRVPASPRAFVYPRSVESPRFGSPRSVESPCFGSPIGVIDTASPFESVREAVSKFGGITDWKAHKIQTIERRKMVDEELEKIQEAMPEYKREAELAEEAKYDALEELENTKGLIEELKLELEKAEKEEQQAKQDSELAQMRVEEMEKGVANEASVAVKTQLEVAKARQVSATSELRSVREEIEMVSNEYKDMLREKELAAERADIAVLEAKEIERTMDGLSIELIATKELLESVHTAHLEAEEKRFSVAMARDQDVYNWEKELKMVENDIERLNQEVRAADDVKAKLETASALQHDLKTELAAFTDISSGNLLLEKNDIHAAVESARRELEEVKANIEKAASEVKKLKIIAGSLQSELGRERQDLEETKQKESTGLARTNDKDAGEELVETAKKLEQATKEAEDAKALATASRDELRMAKELSEQAKRGMSTIESRLVEAKKEMEAARASEKLALAAIKALQETESSQRFEEINNSPRSIIISVEEYYELSKQALESEEEANTRLSEIVSQIEVAKEEESRILEKLEEVNREMSVRKAELKEANGKAEKARDGKLGMEQELRKWRSENGKRRTDEGREPEKSPTRSSTEGRNKENGFGQSKSFAFGEQGSSSNNTGGSTTTNNNNLTPETKKKKKKLSLFPKVFMFLSRKKSHSHK.

Ser113 carries the post-translational modification Phosphoserine. 2 coiled-coil regions span residues Glu165–Glu558 and Gln588–Asp647. 2 stretches are compositionally biased toward basic and acidic residues: residues Arg455 to Glu467 and Asn625 to Glu689. Disordered stretches follow at residues Arg455–Ala479 and Asn625–Lys751. Positions Gly704–Pro723 are enriched in low complexity.

Belongs to the WEB family.

This chain is Protein WEAK CHLOROPLAST MOVEMENT UNDER BLUE LIGHT-like 3 (WEL3), found in Arabidopsis thaliana (Mouse-ear cress).